Here is a 424-residue protein sequence, read N- to C-terminus: Folate-like transporter 3 (424 aa).

Residue Asn35 is glycosylated (N-linked (GlcNAc...) asparagine). The next 5 membrane-spanning stretches (helical) occupy residues 55–75, 78–98, 101–119, 136–156, and 164–184; these read VALIPSFLLTDVLLYKPILII, LSYFACWMIFVFGRSVWCMQL, LFYGWATATEIAYFAYIYV, ALLVGRFLAYTLAQLLIGLNW, and IINLVSMTFAVFLAAILPHVP. N-linked (GlcNAc...) asparagine glycosylation is present at Asn254. Transmembrane regions (helical) follow at residues 313-333, 361-381, and 392-412; these read GLLFWMSQSHEIIILYICYII, LFGINTFVALALQSILTAIVI, and FVVYSGYHIVVATLFGIIFGI.

Belongs to the reduced folate carrier (RFC) transporter (TC 2.A.48) family.

Its subcellular location is the membrane. In Caenorhabditis elegans, this protein is Folate-like transporter 3 (folt-3).